The primary structure comprises 351 residues: Caveolin-2 (351 aa).

Polar residues predominate over residues 1–14 (MTRQNTSESDNTQR). Disordered regions lie at residues 1-55 (MTRQ…QGIA), 71-93 (HRTS…YDNL), and 144-193 (QKGS…PEME). Residues 1 to 261 (MTRQNTSESD…FEIVRIYSYK (261 aa)) are Cytoplasmic-facing. Residues 22-31 (TVDDIDELTD) show a composition bias toward acidic residues. The segment covering 38 to 51 (HHHHHHHHEHHHQH) has biased composition (basic residues). Residues 167–184 (PAQQSAPPTQQSRPQTTS) are compositionally biased toward low complexity. The helical intramembrane region spans 262 to 290 (ILTLIFGLIIAFLGGILFALFAFLNIWIF). The Cytoplasmic portion of the chain corresponds to 291–351 (RPILILTRMA…EVWEKHIHHV (61 aa)).

Belongs to the caveolin family. Homooligomer. In terms of tissue distribution, expressed in intracellular bodies in intestinal cells.

The protein localises to the golgi apparatus membrane. The protein resides in the cell membrane. It localises to the membrane. It is found in the caveola. Its subcellular location is the apical cell membrane. Its function is as follows. May act as a scaffolding protein within caveolar membranes. Interacts directly with G-protein alpha subunits and can regulate their activity. Thought to have a role in the uptake of lipids and proteins in the intestinal cells; operates in the apical uptake of lipid markers and trafficking of yolk proteins. Affects fecundity and egg laying. The polypeptide is Caveolin-2 (cav-2) (Caenorhabditis elegans).